The chain runs to 194 residues: Surfactant protein C (194 aa).

The segment at 1–21 is disordered; the sequence is MDMGSKEVLMESPPDYSTGPR. A propeptide spanning residues 1-23 is cleaved from the precursor; sequence MDMGSKEVLMESPPDYSTGPRSQ. 2 S-palmitoyl cysteine lipidation sites follow: C28 and C29. The propeptide occupies 59–194; that stretch reads HMSQKHTEMV…LCGELPLYYI (136 aa). In terms of domain architecture, BRICHOS spans 95-194; that stretch reads FSIGSTGIVL…LCGELPLYYI (100 aa). C122 and C186 are disulfide-bonded. The tract at residues 149–170 is disordered; it reads SSTPTSKLGQEEGHSAGSDSDS.

The protein localises to the secreted. It is found in the extracellular space. Its subcellular location is the surface film. Pulmonary surfactant associated proteins promote alveolar stability by lowering the surface tension at the air-liquid interface in the peripheral air spaces. This Rattus norvegicus (Rat) protein is Surfactant protein C.